Reading from the N-terminus, the 267-residue chain is Phosphatidylserine decarboxylase proenzyme (267 aa).

Residues Asp78, His132, and Ser236 each act as charge relay system; for autoendoproteolytic cleavage activity in the active site. Catalysis depends on Ser236, which acts as the Schiff-base intermediate with substrate; via pyruvic acid; for decarboxylase activity. Ser236 is modified (pyruvic acid (Ser); by autocatalysis).

This sequence belongs to the phosphatidylserine decarboxylase family. PSD-B subfamily. Prokaryotic type I sub-subfamily. Heterodimer of a large membrane-associated beta subunit and a small pyruvoyl-containing alpha subunit. Requires pyruvate as cofactor. In terms of processing, is synthesized initially as an inactive proenzyme. Formation of the active enzyme involves a self-maturation process in which the active site pyruvoyl group is generated from an internal serine residue via an autocatalytic post-translational modification. Two non-identical subunits are generated from the proenzyme in this reaction, and the pyruvate is formed at the N-terminus of the alpha chain, which is derived from the carboxyl end of the proenzyme. The autoendoproteolytic cleavage occurs by a canonical serine protease mechanism, in which the side chain hydroxyl group of the serine supplies its oxygen atom to form the C-terminus of the beta chain, while the remainder of the serine residue undergoes an oxidative deamination to produce ammonia and the pyruvoyl prosthetic group on the alpha chain. During this reaction, the Ser that is part of the protease active site of the proenzyme becomes the pyruvoyl prosthetic group, which constitutes an essential element of the active site of the mature decarboxylase.

Its subcellular location is the cell membrane. The catalysed reaction is a 1,2-diacyl-sn-glycero-3-phospho-L-serine + H(+) = a 1,2-diacyl-sn-glycero-3-phosphoethanolamine + CO2. It participates in phospholipid metabolism; phosphatidylethanolamine biosynthesis; phosphatidylethanolamine from CDP-diacylglycerol: step 2/2. Functionally, catalyzes the formation of phosphatidylethanolamine (PtdEtn) from phosphatidylserine (PtdSer). In Helicobacter pylori (strain Shi470), this protein is Phosphatidylserine decarboxylase proenzyme.